Consider the following 208-residue polypeptide: MNVNVINHPLVRHKLTLMREADCSTYKFRTLATELARLMAYEASRDFEIEKYLIDGWCGQIEGDRIKGKTLTVVPILRAGLGMLDGVLDLIPTAKISVVGLQRDEETLKPISYFEKFVDSMDERPALIIDPMLATGGSMVATIDLLKAKGCKNIKALVLVAAPEGVKAVNDAHPDVTIYTAALDSHLNENGYIIPGLGDAGDKIFGTR.

5-phospho-alpha-D-ribose 1-diphosphate-binding positions include arginine 78, arginine 103, and 130–138 (DPMLATGGS). Uracil contacts are provided by residues isoleucine 193 and 198-200 (GDA). Aspartate 199 lines the 5-phospho-alpha-D-ribose 1-diphosphate pocket.

This sequence belongs to the UPRTase family. It depends on Mg(2+) as a cofactor.

It carries out the reaction UMP + diphosphate = 5-phospho-alpha-D-ribose 1-diphosphate + uracil. Its pathway is pyrimidine metabolism; UMP biosynthesis via salvage pathway; UMP from uracil: step 1/1. Allosterically activated by GTP. Its function is as follows. Catalyzes the conversion of uracil and 5-phospho-alpha-D-ribose 1-diphosphate (PRPP) to UMP and diphosphate. The polypeptide is Uracil phosphoribosyltransferase (Neisseria meningitidis serogroup B (strain ATCC BAA-335 / MC58)).